The primary structure comprises 339 residues: DNA-directed RNA polymerase subunit alpha (339 aa).

The tract at residues 1 to 233 (MVREEVAGST…DLFLPFLHAE (233 aa)) is alpha N-terminal domain (alpha-NTD). The segment at 264-339 (KKGIPLNSIF…IDLLKNKLSF (76 aa)) is alpha C-terminal domain (alpha-CTD).

The protein belongs to the RNA polymerase alpha chain family. In terms of assembly, in plastids the minimal PEP RNA polymerase catalytic core is composed of four subunits: alpha, beta, beta', and beta''. When a (nuclear-encoded) sigma factor is associated with the core the holoenzyme is formed, which can initiate transcription.

It is found in the plastid. It localises to the chloroplast. It carries out the reaction RNA(n) + a ribonucleoside 5'-triphosphate = RNA(n+1) + diphosphate. Functionally, DNA-dependent RNA polymerase catalyzes the transcription of DNA into RNA using the four ribonucleoside triphosphates as substrates. This chain is DNA-directed RNA polymerase subunit alpha, found in Aegilops tauschii (Tausch's goatgrass).